A 552-amino-acid chain; its full sequence is MERFLRKFNMNSYYANHVKMFQALSPQWTCSHLRRNCLFDGVCAKQHFEEVMNRITERNDAHAAYRLAEMAQITMLDREKVWLQCYKSFSEPYDENIAEKIQICGRELLDKYKNSDMVTKIDNMIKFDPTRIVLDDNFSAFPYLYIPVNYGQMVQPIRIMRYRQIGYCFYQPDAVDDWIAPDIYPMRRPRMEMCRQVKEAVGSCSFTGFSGPVFQIMFFPMQMLPYMENEGFAKIINRYAQMAVQAIFTSRLHRGERYVTQLFGECPAGEFPMHHMMLRRWEGNGRPQTLVQMRHTIAGNKEWQTWLLPMILVRIAVREPANFEYVRGFMQGRHKCQLCFLKNGCDRETFYHIDVRTSEIVGCSTVTQVMIGEHVDISLPVQKIKLTGTEHLGRASDHYFKYNATTGMEALIRTAIQIHRWIRGTGIWENDEWQEGIYLLARVLLRWELSTQARSIMFRLFCFVCFGYAPRKDGTVPDWKDLGAFLDIILNGTELGDDEDETGQTGIMFELSRCVMTLAYAERIKVVTFNAPECDEGAVMNIAQAMANMWDN.

Belongs to the orbivirus non-structural protein NS1 family.

This Epizootic hemorrhagic disease virus 2 (strain Alberta) (EHDV-2) protein is Non-structural protein NS1 (Segment-5).